The chain runs to 145 residues: UPF0735 ACT domain-containing protein CKL_0858 (145 aa).

In terms of domain architecture, ACT spans 69-144 (TLGLTLAHKA…SVIKVNLAAV (76 aa)).

This sequence belongs to the UPF0735 family.

This is UPF0735 ACT domain-containing protein CKL_0858 from Clostridium kluyveri (strain ATCC 8527 / DSM 555 / NBRC 12016 / NCIMB 10680 / K1).